Here is a 127-residue protein sequence, read N- to C-terminus: Riboflavin kinase (127 aa).

10-15 (GLGEGR) contacts CDP. Thr-39 and Asn-41 together coordinate Mg(2+). FMN is bound by residues Thr-96 and Glu-104. 109–112 (IQLR) contacts CDP.

The protein belongs to the archaeal riboflavin kinase family. Mg(2+) serves as cofactor.

It carries out the reaction riboflavin + CTP = CDP + FMN + H(+). It functions in the pathway cofactor biosynthesis; FMN biosynthesis; FMN from riboflavin (CTP route): step 1/1. In terms of biological role, catalyzes the CTP-dependent phosphorylation of riboflavin (vitamin B2) to form flavin mononucleotide (FMN). The chain is Riboflavin kinase from Methanococcus maripaludis (strain C5 / ATCC BAA-1333).